A 388-amino-acid chain; its full sequence is Ovalbumin-related protein Y (388 aa).

An intrachain disulfide couples cysteine 74 to cysteine 121. 4 N-linked (GlcNAc...) asparagine glycosylation sites follow: asparagine 95, asparagine 215, asparagine 293, and asparagine 312.

Belongs to the serpin family. Ov-serpin subfamily. Post-translationally, N-glycosylated on at least two Asn residues by ovomucoid type carbohydrate units. In terms of processing, the N-terminus is blocked. In terms of tissue distribution, major protein of egg white. Expressed in the magnum of the oviduct (at protein level).

The protein localises to the secreted. This chain is Ovalbumin-related protein Y (SERPINB14B), found in Gallus gallus (Chicken).